Reading from the N-terminus, the 63-residue chain is Small ribosomal subunit protein eS31 (63 aa).

Positions 34, 37, 53, and 56 each coordinate Zn(2+). Residues 34-56 (CPKCGSVMAFHREPVPRWHCGKC) form a C4-type zinc finger.

Belongs to the eukaryotic ribosomal protein eS31 family. In terms of assembly, part of the 30S ribosomal subunit. Requires Zn(2+) as cofactor.

The polypeptide is Small ribosomal subunit protein eS31 (Pyrobaculum neutrophilum (strain DSM 2338 / JCM 9278 / NBRC 100436 / V24Sta) (Thermoproteus neutrophilus)).